Reading from the N-terminus, the 414-residue chain is Glucose-1-phosphate adenylyltransferase (414 aa).

Alpha-D-glucose 1-phosphate-binding positions include Tyr-99, Gly-164, 181-182, and Ser-199; that span reads EK.

The protein belongs to the bacterial/plant glucose-1-phosphate adenylyltransferase family. Homotetramer.

The catalysed reaction is alpha-D-glucose 1-phosphate + ATP + H(+) = ADP-alpha-D-glucose + diphosphate. It functions in the pathway glycan biosynthesis; glycogen biosynthesis. Involved in the biosynthesis of ADP-glucose, a building block required for the elongation reactions to produce glycogen. Catalyzes the reaction between ATP and alpha-D-glucose 1-phosphate (G1P) to produce pyrophosphate and ADP-Glc. The chain is Glucose-1-phosphate adenylyltransferase from Bifidobacterium adolescentis (strain ATCC 15703 / DSM 20083 / NCTC 11814 / E194a).